We begin with the raw amino-acid sequence, 309 residues long: Wnt inhibitor of Dorsal protein (309 aa).

Positions 1-16 are cleaved as a signal peptide; sequence MIFAITFFMGITSTLA. Intrachain disulfides connect C51/C62, C102/C110, C112/C121, C162/C179, C164/C174, C232/C269, C248/C262, C266/C308, C284/C299, and C286/C296.

The protein belongs to the Wnt family.

It localises to the secreted. The protein resides in the extracellular space. It is found in the extracellular matrix. Binds as a ligand to a family of frizzled seven-transmembrane receptors and acts through a cascade of genes on the nucleus. The sequence is that of Wnt inhibitor of Dorsal protein (wntD) from Drosophila melanogaster (Fruit fly).